An 881-amino-acid chain; its full sequence is Envelope glycoprotein gp160 (881 aa).

An N-terminal signal peptide occupies residues 1 to 19 (MGCLGNQLLIAILLLSVYG). Over 20–696 (IYCTQYVTVF…ASWIKYIQYG (677 aa)) the chain is Extracellular. Residue Asn37 is glycosylated (N-linked (GlcNAc...) asparagine; by host). A disulfide bridge connects residues Cys44 and Cys57. N-linked (GlcNAc...) asparagine; by host glycosylation is found at Asn70, Asn114, Asn148, Asn158, Asn186, Asn200, Asn204, Asn214, Asn246, Asn249, Asn280, Asn286, Asn297, Asn308, Asn318, Asn373, and Asn379. 5 disulfide bridges follow: Cys101–Cys222, Cys108–Cys213, Cys113–Cys170, Cys235–Cys265, and Cys245–Cys257. The V1 stretch occupies residues 113–169 (CNKSETDRWGLTKSSTTITTAAPTSAPVSEKIDMVNETSSCIAQNNCTGLEQEQMIS). Residues 170–213 (CKFTMTGLKRDKTKEYNETWYSTDLVCEQGNSTDNESRCYMNHC) are V2. Positions 313-345 (CRRPGNKTVLPVTIMSGLVFHSQPLTDRPKQAW) are V3. Cys313 and Cys346 are joined by a disulfide. 2 cysteine pairs are disulfide-bonded: Cys397–Cys461 and Cys404–Cys434. Residues 404-434 (CKMNWFLNWVEDRDVTTQRPKERHRRNYVPC) form a V4 region. N-linked (GlcNAc...) asparagine; by host glycans are attached at residues Asn462 and Asn478. Positions 477–484 (GNQTSITM) are V5. The fusion peptide stretch occupies residues 528-548 (GVFVLGFLGFLATAGSAMGAA). The immunosuppression stretch occupies residues 591 to 607 (LQTRVTAIEKYLEDQAQ). N-linked (GlcNAc...) asparagine; by host glycosylation is found at Asn627, Asn636, and Asn652. The stretch at 636-668 (NDTWQEWERKVDFLEENITALLEEAQIQQEKNM) forms a coiled coil. Residues 673–694 (KLNSWDVFGNWFDLASWIKYIQ) form an MPER; binding to GalCer region. The helical transmembrane segment at 697–717 (IYVVVGVILLRIVIYIVQMLA) threads the bilayer. Residues 718 to 881 (KLRQGYRPVF…IRQGLELTLL (164 aa)) are Cytoplasmic-facing. A YXXV motif; contains endocytosis signal motif is present at residues 723 to 726 (YRPV). Residues 737–761 (THTQQDPALPTREGKEGDGGEGGGN) form a disordered region. Residue Cys789 is the site of S-palmitoyl cysteine; by host attachment. The Di-leucine internalization motif signature appears at 880-881 (LL).

The mature envelope protein (Env) consists of a homotrimer of non-covalently associated gp120-gp41 heterodimers. The resulting complex protrudes from the virus surface as a spike. Interacts with host CD4 and CCR5. Gp120 also interacts with the C-type lectins CD209/DC-SIGN and CLEC4M/DC-SIGNR (collectively referred to as DC-SIGN(R)). In terms of assembly, the mature envelope protein (Env) consists of a homotrimer of non-covalently associated gp120-gp41 heterodimers. The resulting complex protrudes from the virus surface as a spike. Specific enzymatic cleavages in vivo yield mature proteins. Envelope glycoproteins are synthesized as an inactive precursor that is heavily N-glycosylated and processed likely by host cell furin in the Golgi to yield the mature SU and TM proteins. The cleavage site between SU and TM requires the minimal sequence [KR]-X-[KR]-R. Post-translationally, palmitoylation of the transmembrane protein and of Env polyprotein (prior to its proteolytic cleavage) is essential for their association with host cell membrane lipid rafts. Palmitoylation is therefore required for envelope trafficking to classical lipid rafts, but not for viral replication.

It is found in the virion membrane. The protein localises to the host cell membrane. The protein resides in the host endosome membrane. Its function is as follows. The surface protein gp120 (SU) attaches the virus to the host lymphoid cell by binding to the primary receptor CD4. This interaction induces a structural rearrangement creating a high affinity binding site for a chemokine coreceptor like CCR5. This peculiar 2 stage receptor-interaction strategy allows gp120 to maintain the highly conserved coreceptor-binding site in a cryptic conformation, protected from neutralizing antibodies. These changes are transmitted to the transmembrane protein gp41 and are thought to activate its fusogenic potential by unmasking its fusion peptide. Surface protein gp120 (SU) may target the virus to gut-associated lymphoid tissue (GALT) by binding host ITGA4/ITGB7 (alpha-4/beta-7 integrins), a complex that mediates T-cell migration to the GALT. Interaction between gp120 and ITGA4/ITGB7 would allow the virus to enter GALT early in the infection, infecting and killing most of GALT's resting CD4+ T-cells. This T-cell depletion is believed to be the major insult to the host immune system leading to AIDS. In terms of biological role, the surface protein gp120 is a ligand for CD209/DC-SIGN and CLEC4M/DC-SIGNR, which are respectively found on dendritic cells (DCs), and on endothelial cells of liver sinusoids and lymph node sinuses. These interactions allow capture of viral particles at mucosal surfaces by these cells and subsequent transmission to permissive cells. DCs are professional antigen presenting cells, critical for host immunity by inducing specific immune responses against a broad variety of pathogens. They act as sentinels in various tissues where they take up antigen, process it, and present it to T-cells following migration to lymphoid organs. SIV subverts the migration properties of dendritic cells to gain access to CD4+ T-cells in lymph nodes. Virus transmission to permissive T-cells occurs either in trans (without DCs infection, through viral capture and transmission), or in cis (following DCs productive infection, through the usual CD4-gp120 interaction), thereby inducing a robust infection. In trans infection, bound virions remain infectious over days and it is proposed that they are not degraded, but protected in non-lysosomal acidic organelles within the DCs close to the cell membrane thus contributing to the viral infectious potential during DCs' migration from the periphery to the lymphoid tissues. On arrival at lymphoid tissues, intact virions recycle back to DCs' cell surface allowing virus transmission to CD4+ T-cells. Virion capture also seems to lead to MHC-II-restricted viral antigen presentation, and probably to the activation of SIV-specific CD4+ cells. Functionally, the transmembrane protein gp41 (TM) acts as a class I viral fusion protein. Under the current model, the protein has at least 3 conformational states: pre-fusion native state, pre-hairpin intermediate state, and post-fusion hairpin state. During fusion of viral and target intracellular membranes, the coiled coil regions (heptad repeats) assume a trimer-of-hairpins structure, positioning the fusion peptide in close proximity to the C-terminal region of the ectodomain. The formation of this structure appears to drive apposition and subsequent fusion of viral and target cell membranes. Complete fusion occurs in host cell endosomes. The virus undergoes clathrin-dependent internalization long before endosomal fusion, thus minimizing the surface exposure of conserved viral epitopes during fusion and reducing the efficacy of inhibitors targeting these epitopes. Membranes fusion leads to delivery of the nucleocapsid into the cytoplasm. Its function is as follows. The envelope glycoprotein gp160 precursor down-modulates cell surface CD4 antigen by interacting with it in the endoplasmic reticulum and blocking its transport to the cell surface. The gp120-gp41 heterodimer allows rapid transcytosis of the virus through CD4 negative cells such as simple epithelial monolayers of the intestinal, rectal and endocervical epithelial barriers. Both gp120 and gp41 specifically recognize glycosphingolipids galactosyl-ceramide (GalCer) or 3' sulfo-galactosyl-ceramide (GalS) present in the lipid rafts structures of epithelial cells. Binding to these alternative receptors allows the rapid transcytosis of the virus through the epithelial cells. This transcytotic vesicle-mediated transport of virions from the apical side to the basolateral side of the epithelial cells does not involve infection of the cells themselves. This Simian immunodeficiency virus (isolate K6W) (SIV-mac) protein is Envelope glycoprotein gp160 (env).